Here is a 313-residue protein sequence, read N- to C-terminus: tRNA pseudouridine synthase B (313 aa).

Residue histidine 44 participates in substrate binding. Aspartate 49 (nucleophile) is an active-site residue. Tyrosine 77, tyrosine 180, and leucine 201 together coordinate substrate.

It belongs to the pseudouridine synthase TruB family. Type 1 subfamily.

The enzyme catalyses uridine(55) in tRNA = pseudouridine(55) in tRNA. Responsible for synthesis of pseudouridine from uracil-55 in the psi GC loop of transfer RNAs. The chain is tRNA pseudouridine synthase B from Hamiltonella defensa subsp. Acyrthosiphon pisum (strain 5AT).